Reading from the N-terminus, the 688-residue chain is Complement C1s subcomponent (688 aa).

Positions 1–15 are cleaved as a signal peptide; that stretch reads MWCIVLFSLLAWVYA. Residues 16 to 130 form the CUB 1 domain; it reads EPTMYGEILS…TGFAAYYVAT (115 aa). Ca(2+) is bound by residues Glu-60, Asp-68, Asp-113, Asp-131, Ile-132, and Glu-134. An intrachain disulfide couples Cys-65 to Cys-83. The EGF-like; calcium-binding domain occupies 131 to 172; it reads DINECTDFVDVPCSHFCNNFIGGYFCSCPPEYFLHDDMKNCG. Intrachain disulfides connect Cys-135–Cys-147, Cys-143–Cys-156, and Cys-158–Cys-171. The Ca(2+) site is built by Asn-149, Phe-150, and Gly-153. Asn-149 is modified ((3R)-3-hydroxyasparagine). The N-linked (GlcNAc...) asparagine glycan is linked to Asn-174. Cys-175 and Cys-202 are joined by a disulfide. The CUB 2 domain occupies 175 to 290; the sequence is CSGDVFTALI…KGWKLRYHGD (116 aa). The Ca(2+) site is built by Glu-226, Asp-236, Asp-275, Gly-278, and Gln-279. Cys-234 and Cys-251 are joined by a disulfide. 2 Sushi domains span residues 292–356 and 357–423; these read MPCP…KCQP and VDCG…KCVP. 7 disulfides stabilise this stretch: Cys-294/Cys-341, Cys-321/Cys-354, Cys-359/Cys-403, Cys-386/Cys-421, Cys-425/Cys-549, Cys-595/Cys-618, and Cys-628/Cys-659. An N-linked (GlcNAc...) asparagine glycan is attached at Asn-406. The Peptidase S1 domain maps to 438–680; the sequence is IIGGSDADIK…YVDWIMKTMQ (243 aa). Residues His-475 and Asp-529 each act as charge relay system in the active site. Catalysis depends on Ser-632, which acts as the Charge relay system.

It belongs to the peptidase S1 family. In terms of assembly, core component of the complement C1 complex, a calcium-dependent complex composed of 1 molecule of the C1Q subcomplex, 2 molecules of C1R and 2 molecules of C1S. The C1Q subcomplex is composed 18 subunits: 3 chains of C1QA, C1QB, and C1QC trimerize to form 6 collagen-like triple helices connected to six globular ligand-recognition modules. Post-translationally, cleaved and activated by C1R to generate Complement C1s subcomponent heavy and light chains. In terms of processing, the iron and 2-oxoglutarate dependent 3-hydroxylation of aspartate and asparagine is (R) stereospecific within EGF domains.

It is found in the secreted. The protein resides in the cell surface. The catalysed reaction is Cleavage of Arg-|-Ala bond in complement component C4 to form C4a and C4b, and Lys(or Arg)-|-Lys bond in complement component C2 to form C2a and C2b: the 'classical' pathway C3 convertase.. Its activity is regulated as follows. Cleaved and activated by C1R. Immunoglobulin-binding promotes autoactivation of C1R, which results in the cleavage of the Arg-Ile bond in the catalytic domain. Inhibited by C1 inhibitor (SERPING1). In terms of biological role, component of the complement C1 complex, a multiprotein complex that initiates the classical pathway of the complement system, a cascade of proteins that leads to phagocytosis and breakdown of pathogens and signaling that strengthens the adaptive immune system. C1S is activated following association of the C1 complex with immunoglobulins (IgG or IgM) complexed with antigens to form antigen-antibody complexes on the surface of pathogens. C1S is cleaved and activated by C1R to generate C1s subcomponent heavy and light chains. C1s subcomponent light chain then cleaves and activates C2 and C4, the next components of the classical complement pathway. Its function is as follows. Serine protease component of the complement C1 complex, which catalyzes cleavage and activation of C2 and C4, the next components of the classical complement pathway. Also able to cleave C1 inhibitor (SERPING1) in vitro; additional evidence is however required to confirm this result in vivo. Also cleaves IGFBP5 and thereby inhibits the trophic effects of IGF1. The sequence is that of Complement C1s subcomponent from Homo sapiens (Human).